Here is a 343-residue protein sequence, read N- to C-terminus: Putative KilA-N domain-containing protein R904 (343 aa).

The KilA-N domain maps to 51–157 (EFSWGNYLNL…IKASVIINDY (107 aa)). Residues 159 to 279 (AKQMFKEHEK…NAVKEYKELY (121 aa)) are a coiled coil.

This Acanthamoeba polyphaga mimivirus (APMV) protein is Putative KilA-N domain-containing protein R904.